The following is a 452-amino-acid chain: MISQFFILSSKGDPLIYKDFRGDSGGRDVAELFYRKLTGLPGDESPVVMHHDDRHFIHIRHSGLYLVATTSENISPFSLLELLSRLATLLGDYCGSLGEATISRNVALVYELLDEVLDYGYVQTTSTEVLRNFIQTEAVVSKPFSLFDLSSVGLFGAETQQSKVAPSSAASRPVLSSRSDQSQKNEVFLDVVERLSVLIASNGSLLKVDVQGEIRLKSFLPSGSEMRIGLTEEFCVGKSELRGYGPGIRVDEVSFHSSVYLDEFESHRILRLQPPQGELTVMRYQLSDDLPSPLPFRLFPSVQWDRGSGRLQVYLKLRCDLPPKSQALNVRLHLPLPRGVVSLSQELSSPEQKAELGEGALRWDLPRVQGGSQLSGLFQMDVPGLPGPPGQGPSASAPLGLGPASLSFELPRHTCSGLQVRFLRLAFRPCGNANPHKWVRHLSHSDAYVIRI.

One can recognise an MHD domain in the interval 184-451 (KNEVFLDVVE…LSHSDAYVIR (268 aa)).

This sequence belongs to the adaptor complexes medium subunit family. In terms of assembly, adaptor protein complex 4 (AP-4) is a heterotetramer composed of two large adaptins (epsilon-type subunit AP4E1 and beta-type subunit AP4B1), a medium adaptin (mu-type subunit AP4M1) and a small adaptin (sigma-type AP4S1). Interacts with tyrosine-based sorting signals on the cytoplasmic tail of cargo proteins such as APP, ATG9A, LAMP2 and NAGPA. Interacts with the C-terminal domain of GRID2. Interacts with GRIA1 and GRIA2; the interaction is indirect via CACNG3. Interacts with CACNG3; CACNG3 associates GRIA1 and GRIA2 with the adaptor protein complex 4 (AP-4) to target them to the somatodendritic compartment of neurons. Interacts with HOOK1 and HOOK2; the interactions are direct, mediate the interaction between FTS-Hook-FHIP (FHF) complex and AP-4 and the perinuclear distribution of AP-4.

It is found in the golgi apparatus. It localises to the trans-Golgi network membrane. Its subcellular location is the early endosome. Functionally, component of the adaptor protein complex 4 (AP-4). Adaptor protein complexes are vesicle coat components involved both in vesicle formation and cargo selection. They control the vesicular transport of proteins in different trafficking pathways. AP-4 forms a non clathrin-associated coat on vesicles departing the trans-Golgi network (TGN) and may be involved in the targeting of proteins from the trans-Golgi network (TGN) to the endosomal-lysosomal system. It is also involved in protein sorting to the basolateral membrane in epithelial cells and the proper asymmetric localization of somatodendritic proteins in neurons. Within AP-4, the mu-type subunit AP4M1 is directly involved in the recognition and binding of tyrosine-based sorting signals found in the cytoplasmic part of cargos. The adaptor protein complex 4 (AP-4) may also recognize other types of sorting signal. The chain is AP-4 complex subunit mu-1 from Bos taurus (Bovine).